Consider the following 431-residue polypeptide: Histidinol dehydrogenase (431 aa).

Positions 127, 190, and 213 each coordinate NAD(+). Substrate contacts are provided by Ser-238, Gln-260, and His-263. Gln-260 and His-263 together coordinate Zn(2+). Catalysis depends on proton acceptor residues Glu-329 and His-330. Substrate contacts are provided by His-330, Asp-363, Glu-417, and His-422. Residue Asp-363 coordinates Zn(2+). Zn(2+) is bound at residue His-422.

It belongs to the histidinol dehydrogenase family. Zn(2+) serves as cofactor.

The enzyme catalyses L-histidinol + 2 NAD(+) + H2O = L-histidine + 2 NADH + 3 H(+). The protein operates within amino-acid biosynthesis; L-histidine biosynthesis; L-histidine from 5-phospho-alpha-D-ribose 1-diphosphate: step 9/9. In terms of biological role, catalyzes the sequential NAD-dependent oxidations of L-histidinol to L-histidinaldehyde and then to L-histidine. This Methanopyrus kandleri (strain AV19 / DSM 6324 / JCM 9639 / NBRC 100938) protein is Histidinol dehydrogenase.